A 339-amino-acid polypeptide reads, in one-letter code: Cyclic AMP-dependent transcription factor ATF-4 (339 aa).

3 disordered regions span residues glycine 14 to leucine 62, proline 153 to valine 182, and glutamine 209 to aspartate 313. Residues valine 35–serine 55 are compositionally biased toward low complexity. The span at serine 162 to glutamate 173 shows a compositional bias: pro residues. The segment covering isoleucine 211 to serine 226 has biased composition (low complexity). The span at serine 231–proline 247 shows a compositional bias: basic and acidic residues. Residues valine 266–methionine 329 enclose the bZIP domain. Residues lysine 268–arginine 288 form a basic motif region. A leucine-zipper region spans residues leucine 294–leucine 322. A compositionally biased stretch (basic and acidic residues) spans glutamate 300–aspartate 313.

It belongs to the bZIP family. Binds DNA as a homodimer and as a heterodimer.

The protein localises to the nucleus. In terms of biological role, transcription factor that binds the cAMP response element (CRE) (consensus: 5'-GTGACGT[AC][AG]-3') and displays two biological functions, as regulator of metabolic and redox processes under normal cellular conditions, and as master transcription factor during integrated stress response (ISR). Binds to asymmetric CRE's as a heterodimer and to palindromic CRE's as a homodimer. Core effector of the ISR, which is required for adaptation to various stress such as endoplasmic reticulum (ER) stress, amino acid starvation, mitochondrial stress or oxidative stress. During ISR, atf4 translation is induced via an alternative ribosome translation re-initiation mechanism in response to eif2s1/eIF-2-alpha phosphorylation, and stress-induced atf4 acts as a master transcription factor of stress-responsive genes in order to promote cell recovery. Promotes the transcription of genes linked to amino acid sufficiency and resistance to oxidative stress to protect cells against metabolic consequences of ER oxidation. In the absence of stress, atf4 translation is at low levels and it is required for normal metabolic processes such as embryonic lens formation, fetal liver hematopoiesis, bone development and synaptic plasticity. Acts as a regulator of osteoblast differentiation by promoting expression of osteoblast-specific genes. Regulates the circadian expression of the core clock components. Mainly acts as a transcriptional activator in cellular stress adaptation, but it can also act as a transcriptional repressor. In Danio rerio (Zebrafish), this protein is Cyclic AMP-dependent transcription factor ATF-4 (atf4).